We begin with the raw amino-acid sequence, 428 residues long: Tubby-like F-box protein 5 (428 aa).

The interval 17-65 (IGSMSRRAADGRAGGGRGGSRHSWPVLWSEQQQPPQQQQLQRQEHQQQQ) is disordered. Residues 47–65 (QQQPPQQQQLQRQEHQQQQ) show a composition bias toward low complexity. The 53-residue stretch at 65–117 (QGRWANLPPELLLDVIQRVEASEATWPARRQVVACAAVCRSWREVTKEVVKTL) folds into the F-box domain.

It belongs to the TUB family. Ubiquitous.

The polypeptide is Tubby-like F-box protein 5 (TULP5) (Oryza sativa subsp. japonica (Rice)).